An 863-amino-acid polypeptide reads, in one-letter code: Paramyosin (863 aa).

A nonhelical region region spans residues 1 to 18 (MSESHVKISRTIIRGTSP). Residues 19–836 (STVRLESRVR…ERTITIKRTI (818 aa)) are a coiled coil. Residues 837–863 (GGPGSRAVSVVREINSVSRGNRATSIM) form a nonhelical region region.

The protein belongs to the paramyosin family. As to quaternary structure, homodimer or monomer in secreted form.

The protein resides in the cytoplasm. Its subcellular location is the myofibril. It localises to the secreted. Functionally, paramyosin is a major structural component of many thick filaments isolated from invertebrate muscles. It is a prominent antigen in human cysticercosis, may have a role as a modulator of the host immune response. It is able to bind collagen and has complement inhibitor activity. The sequence is that of Paramyosin (PMY) from Taenia solium (Pork tapeworm).